A 156-amino-acid polypeptide reads, in one-letter code: Transcriptional repressor NrdR (156 aa).

A zinc finger lies at 3-34 (CPFCGNVDTQVKDSRPAEDHVAIRRRRFCPAC). The ATP-cone domain occupies 49 to 139 (LVVIKSNGKR…VYKNFQATGD (91 aa)).

Belongs to the NrdR family. It depends on Zn(2+) as a cofactor.

Its function is as follows. Negatively regulates transcription of bacterial ribonucleotide reductase nrd genes and operons by binding to NrdR-boxes. The protein is Transcriptional repressor NrdR of Jannaschia sp. (strain CCS1).